Consider the following 282-residue polypeptide: Bis(5'-nucleosyl)-tetraphosphatase, symmetrical (282 aa).

Belongs to the Ap4A hydrolase family.

It catalyses the reaction P(1),P(4)-bis(5'-adenosyl) tetraphosphate + H2O = 2 ADP + 2 H(+). In terms of biological role, hydrolyzes diadenosine 5',5'''-P1,P4-tetraphosphate to yield ADP. This is Bis(5'-nucleosyl)-tetraphosphatase, symmetrical from Sodalis glossinidius (strain morsitans).